We begin with the raw amino-acid sequence, 542 residues long: Thermosome subunit alpha (542 aa).

It belongs to the TCP-1 chaperonin family. Forms a Heterooligomeric complex of two stacked eight-membered rings.

Its function is as follows. Molecular chaperone; binds unfolded polypeptides in vitro, and has a weak ATPase activity. The polypeptide is Thermosome subunit alpha (thsA) (Methanothermobacter thermautotrophicus (strain ATCC 29096 / DSM 1053 / JCM 10044 / NBRC 100330 / Delta H) (Methanobacterium thermoautotrophicum)).